The chain runs to 317 residues: SVP1-like protein 2 (317 aa).

WD repeat units follow at residues 119–159 (AHST…KMAE) and 164–203 (VDHA…NAPY).

The protein belongs to the WD repeat PROPPIN family.

It localises to the vacuole membrane. The protein resides in the cytoplasmic vesicle membrane. Functionally, involved in mitochondrial or peroxisomal functions and amino acid signaling pathways. This Emericella nidulans (strain FGSC A4 / ATCC 38163 / CBS 112.46 / NRRL 194 / M139) (Aspergillus nidulans) protein is SVP1-like protein 2 (hsv2).